We begin with the raw amino-acid sequence, 434 residues long: MQVSVETTQGLGRRVTITVDKDVIENAVKSELVSVAKKVRIDGFRKGKVPMTVVAQRYGASVRQDVLGDLMQRNFVDAIIKEKINPAGSPQYVPGEYKIGEDFTFSAEFEVYPEVELQGLDAIEVEKPVVEVTEADVDTMLETLRKQQATWKETDAAATAEDRATIDFSGSVDGEEFEGGKASDFVLAMGQGRMIPGFEEGVVGHKAGETFTIDVNFPEDYHAENLKGKAAKFDIVLKKVEERELPELTEEFIKRFGVEAGSLDGLRAEVRKNMQRELKGAVRNRVKTQAIDGLVKANDIDVPAALVDGEIDVLKRQAAQRFGGDEKQALELPRELFEEQAKRRVVVGLLLGEVIRTHELKADETRVNALIEEMASAYEDPSEVIEFYSKNNELMNNMRNVALEEQAVEAVLEKAKVTEKATNFQELMNQTATA.

Residues 161-246 (EDRATIDFSG…LKKVEERELP (86 aa)) form the PPIase FKBP-type domain.

Belongs to the FKBP-type PPIase family. Tig subfamily.

It is found in the cytoplasm. It catalyses the reaction [protein]-peptidylproline (omega=180) = [protein]-peptidylproline (omega=0). Its function is as follows. Involved in protein export. Acts as a chaperone by maintaining the newly synthesized protein in an open conformation. Functions as a peptidyl-prolyl cis-trans isomerase. This chain is Trigger factor, found in Erwinia tasmaniensis (strain DSM 17950 / CFBP 7177 / CIP 109463 / NCPPB 4357 / Et1/99).